The following is a 286-amino-acid chain: Bifunctional protein FolD 2 (286 aa).

NADP(+) contacts are provided by residues 165–167 (GRG), threonine 192, and isoleucine 233.

This sequence belongs to the tetrahydrofolate dehydrogenase/cyclohydrolase family. Homodimer.

The enzyme catalyses (6R)-5,10-methylene-5,6,7,8-tetrahydrofolate + NADP(+) = (6R)-5,10-methenyltetrahydrofolate + NADPH. The catalysed reaction is (6R)-5,10-methenyltetrahydrofolate + H2O = (6R)-10-formyltetrahydrofolate + H(+). It participates in one-carbon metabolism; tetrahydrofolate interconversion. Catalyzes the oxidation of 5,10-methylenetetrahydrofolate to 5,10-methenyltetrahydrofolate and then the hydrolysis of 5,10-methenyltetrahydrofolate to 10-formyltetrahydrofolate. The protein is Bifunctional protein FolD 2 of Salinispora arenicola (strain CNS-205).